The sequence spans 270 residues: uncharacterized protein (270 aa).

The first 22 residues, Met1 to Gly22, serve as a signal peptide directing secretion. A lipid anchor (N-palmitoyl cysteine) is attached at Cys23. Cys23 carries the S-diacylglycerol cysteine lipid modification.

The protein belongs to the staphylococcal tandem lipoprotein family.

Its subcellular location is the cell membrane. This is an uncharacterized protein from Staphylococcus aureus (strain MW2).